The primary structure comprises 92 residues: Acyl-CoA-binding domain-containing protein 6 (92 aa).

Residues L3–S88 form the ACB domain. Residues Y30–K34, K52, K56, and Y75 each bind an acyl-CoA.

Belongs to the ACBP family. In terms of assembly, interacts with PDLP8. As to expression, mostly expressed in seeds, stems, and siliques, and, to a lower extent, in leaves, flowers, and roots (at protein level). Highly expressed in root and shoot phloem companion cells.

The protein resides in the cytoplasm. The protein localises to the cell membrane. Functionally, binds medium- and long-chain acyl-CoA esters with very high affinity. May function as an intracellular carrier of acyl-CoA esters. Confers resistance to cold and freezing. Interacts with phosphatidylcholine and derivatives, but not phosphatidic acid and lysophosphatidylcholine. May be involved in phospholipid metabolism. The polypeptide is Acyl-CoA-binding domain-containing protein 6 (ACBP6) (Arabidopsis thaliana (Mouse-ear cress)).